The chain runs to 1284 residues: A-type inclusion protein A25 homolog (1284 aa).

The disordered stretch occupies residues 340 to 383 (KPITNTGIEEPHATGGDKEEQEQQPVKVVQSKPDDGITPYNPFE). A compositionally biased stretch (basic and acidic residues) spans 348–357 (EEPHATGGDK). 10 tandem repeats follow at residues 611-637 (VRRE…RNQE), 638-665 (DTQE…SGGG), 666-689 (NLTE…ECRG), 690-720 (NATE…NNAD), 721-751 (TERE…SNAD), 752-780 (MERE…GNGT), 781-811 (SSEE…ELYS), 812-842 (AYKS…KTDS), 843-871 (YYRR…TNHA), and 872-912 (KYID…REIE). Residues 611–912 (VRRELEEERR…DMDQYKREIE (302 aa)) are 10 X approximate tandem repeats. A disordered region spans residues 1169–1234 (PLTTEDTEPK…PPKPETPQIS (66 aa)). Positions 1180–1192 (VEVVPPSSDVTEP) are enriched in low complexity. Residues 1211–1221 (SEYQTSVSQVA) show a composition bias toward polar residues.

This sequence belongs to the poxviridae A25 protein family. As to quaternary structure, interacts (via N-terminus) with protein A26.

It is found in the virion. Functionally, structural protein that forms a matrix surrounding the mature virion (MV) through interaction with protein A26. Presence of protein A25 in the virion structurally prevents direct virus-cell fusion mechanism. This is A-type inclusion protein A25 homolog (ATI) from Apodemus sylvaticus (European woodmouse).